Here is a 548-residue protein sequence, read N- to C-terminus: MKGIKSKMLSRGKSQDTQKSSKKKESKKSNSHDSSKAPKESPSTDPNGSVIGAQNDFLTVPKHSGKKVPIDTTPTPRDEILLENVRTVRKQRSSLYHISENRNLVRLPSFTDVPVNKWHSLALEKLEQCCVVFDFNDPSTDLYGKEVKREALQDLIDLISVRKEAIDESLYPSIVHMFAVNVFRPLPPPSNPPGEIMDLEEDEPALEVAWPHLHLVYDFFLRFFESPSLNTSVAKVYINQKFIRKLLVLFDSEDPRERDFLKTTLHRIYGKFLSLRAFIRRSINNLFLQFVYENEQFNGIAELLEILGSIINGFALPLKEEHKIFLSRVLIPLHKAKSLPLYYPQIAYGIVQFVEKDSSVTEEVVLGLLRYWPKVNSSKEVLFLNEIEDIIEVMEPSEFLKIQVPLFHKLATSISSQNFQVAERALYFFNNDYFVHLVEENVDIILPIIYPALFEISKSHWNRVIHSMVCNVLKLFMDINPSLFDEVDAEYSESRRKKEDEEIIREERWTILENIAKENAMKLKSQNPTTVHSTTERLKKLSLDYTNG.

Over residues 1–10 (MKGIKSKMLS) the composition is skewed to basic residues. A disordered region spans residues 1-75 (MKGIKSKMLS…KKVPIDTTPT (75 aa)). Over residues 27-39 (KKSNSHDSSKAPK) the composition is skewed to basic and acidic residues. Position 96 is a phosphotyrosine (tyrosine 96). 3 positions are modified to phosphoserine: serine 99, serine 109, and serine 542.

Belongs to the phosphatase 2A regulatory subunit B family. As to quaternary structure, PP2A consists of a common heterodimeric core enzyme, composed of a 36 kDa catalytic subunit (subunit C) and a 65 kDa constant regulatory subunit (PR65 or subunit A), that associates with a variety of regulatory subunits. Proteins that associate with the core dimer include three families of regulatory subunits B (the R2/B/PR55/B55, R3/B''/PR72/PR130/PR59 and R5/B'/B56 families), the 48 kDa variable regulatory subunit, viral proteins, and cell signaling molecules.

Its subcellular location is the cytoplasm. The protein localises to the nucleus. In terms of biological role, the B regulatory subunit might modulate substrate selectivity and catalytic activity, and might also direct the localization of the catalytic enzyme to a particular subcellular compartment. Has a role in cell shape control and septum formation. In Schizosaccharomyces pombe (strain 972 / ATCC 24843) (Fission yeast), this protein is Serine/threonine-protein phosphatase 2A 56 kDa regulatory subunit delta 1 isoform (par1).